A 355-amino-acid polypeptide reads, in one-letter code: MAKLIALTLLGMGLALFRNHQSSYQTRLNALREVQPVELPNCNLVKGIETGSEDLEILPNGLAFISSGLKYPGIKSFNPNSPGKILLMDLNEEDPTVLELGITGSKFDVSSFNPHGISTFTDEDNAMYLLVVNHPDAKSTVELFKFQEEEKSLLHLKTIRHKLLPNLNDIVAVGPEHFYGTNDHYFLDPYLQSWEMYLGLAWSYVVYYSPSEVRVVAEGFDFANGINISPDGKYVYIAELLAHKIHVYEKHANWTLTPLKSLDFNTLVDNISVDPETGDLWVGCHPNGMKIFFYDSENPPASEVLRIQNILTEEPKVTQVYAENGTVLQGSTVASVYKGKLLIGTVFHKALYCEL.

Cys-42 and Cys-353 are disulfide-bonded. Residues Glu-53 and Asp-54 each coordinate Ca(2+). The Proton acceptor role is filled by His-115. Ca(2+)-binding residues include Ile-117, Asn-168, Asp-169, and Asn-224. An N-linked (GlcNAc...) asparagine glycan is attached at Asn-253. Residues Asp-269 and Asn-270 each contribute to the Ca(2+) site. N-linked (GlcNAc...) asparagine glycans are attached at residues Asn-270 and Asn-324.

The protein belongs to the paraoxonase family. Homodimer. Heterooligomer with phosphate-binding protein (HPBP). Interacts with CLU. Ca(2+) is required as a cofactor. In terms of processing, glycosylated. Post-translationally, the signal sequence is not cleaved. Present in two forms, form B contains a disulfide bond, form A does not. Plasma, associated with HDL (at protein level). Expressed in liver, but not in heart, brain, placenta, lung, skeletal muscle, kidney or pancreas.

Its subcellular location is the secreted. It is found in the extracellular space. It catalyses the reaction a phenyl acetate + H2O = a phenol + acetate + H(+). The catalysed reaction is An aryl dialkyl phosphate + H2O = dialkyl phosphate + an aryl alcohol.. It carries out the reaction an N-acyl-L-homoserine lactone + H2O = an N-acyl-L-homoserine + H(+). Its function is as follows. Hydrolyzes the toxic metabolites of a variety of organophosphorus insecticides. Capable of hydrolyzing a broad spectrum of organophosphate substrates and lactones, and a number of aromatic carboxylic acid esters. Mediates an enzymatic protection of low density lipoproteins against oxidative modification and the consequent series of events leading to atheroma formation. In Homo sapiens (Human), this protein is Serum paraoxonase/arylesterase 1 (PON1).